Here is a 302-residue protein sequence, read N- to C-terminus: Methionyl-tRNA formyltransferase (302 aa).

108–111 (SLLP) provides a ligand contact to (6S)-5,6,7,8-tetrahydrofolate.

The protein belongs to the Fmt family.

It carries out the reaction L-methionyl-tRNA(fMet) + (6R)-10-formyltetrahydrofolate = N-formyl-L-methionyl-tRNA(fMet) + (6S)-5,6,7,8-tetrahydrofolate + H(+). In terms of biological role, attaches a formyl group to the free amino group of methionyl-tRNA(fMet). The formyl group appears to play a dual role in the initiator identity of N-formylmethionyl-tRNA by promoting its recognition by IF2 and preventing the misappropriation of this tRNA by the elongation apparatus. This is Methionyl-tRNA formyltransferase from Cereibacter sphaeroides (strain ATCC 17025 / ATH 2.4.3) (Rhodobacter sphaeroides).